We begin with the raw amino-acid sequence, 339 residues long: DNA-directed RNA polymerase subunit alpha (339 aa).

An alpha N-terminal domain (alpha-NTD) region spans residues 1–233 (MVREEVAGST…DLFLPFLHAE (233 aa)). The segment at 264-339 (KKGIPLNCIF…IDLLKNKLSF (76 aa)) is alpha C-terminal domain (alpha-CTD).

Belongs to the RNA polymerase alpha chain family. In terms of assembly, in plastids the minimal PEP RNA polymerase catalytic core is composed of four subunits: alpha, beta, beta', and beta''. When a (nuclear-encoded) sigma factor is associated with the core the holoenzyme is formed, which can initiate transcription.

The protein resides in the plastid. Its subcellular location is the chloroplast. It catalyses the reaction RNA(n) + a ribonucleoside 5'-triphosphate = RNA(n+1) + diphosphate. Its function is as follows. DNA-dependent RNA polymerase catalyzes the transcription of DNA into RNA using the four ribonucleoside triphosphates as substrates. The polypeptide is DNA-directed RNA polymerase subunit alpha (Aegilops uniaristata (Goatgrass)).